A 337-amino-acid chain; its full sequence is Glyceraldehyde-3-phosphate dehydrogenase, cytosolic (337 aa).

NAD(+) is bound by residues 13–14 (RI), D35, and R82. D-glyceraldehyde 3-phosphate is bound by residues 153–155 (SCT), T184, 213–214 (TG), and R236. C154 serves as the catalytic Nucleophile. Position 318 (N318) interacts with NAD(+).

The protein belongs to the glyceraldehyde-3-phosphate dehydrogenase family. As to quaternary structure, homotetramer.

The protein localises to the cytoplasm. It catalyses the reaction D-glyceraldehyde 3-phosphate + phosphate + NAD(+) = (2R)-3-phospho-glyceroyl phosphate + NADH + H(+). It participates in carbohydrate degradation; glycolysis; pyruvate from D-glyceraldehyde 3-phosphate: step 1/5. Its function is as follows. Key enzyme in glycolysis that catalyzes the first step of the pathway by converting D-glyceraldehyde 3-phosphate (G3P) into 3-phospho-D-glyceroyl phosphate. Essential for the maintenance of cellular ATP levels and carbohydrate metabolism. The chain is Glyceraldehyde-3-phosphate dehydrogenase, cytosolic (GAPC) from Antirrhinum majus (Garden snapdragon).